Reading from the N-terminus, the 286-residue chain is MTATLLDGKATAAEIKDELRVRVKALAERGVTPGLGTVLVGADPGSQAYVNGKHRDCAEVGVASLRRELPADASQEQVDAVLADLNADPACHGYIVQLPLPDHLDTQRVLELIDPEKDADGLHPVNLGRLVLGYPGPLPCTPRGIVELLRRHDVALRGARVAVVGRGNTVGRPLGLLLTRRSENATVTLCHTGTLDLSAHTRAADIVIVAAGVPGLLTPDMITPGAVVVDVGITRVIGPDGKGRYTGDVDPGVTEVAGALVPMPGGVGPMTRAMLLTNVVERAERG.

NADP(+) contacts are provided by residues 165–167, Thr192, and Ile233; that span reads GRG.

Belongs to the tetrahydrofolate dehydrogenase/cyclohydrolase family. Homodimer.

It catalyses the reaction (6R)-5,10-methylene-5,6,7,8-tetrahydrofolate + NADP(+) = (6R)-5,10-methenyltetrahydrofolate + NADPH. The enzyme catalyses (6R)-5,10-methenyltetrahydrofolate + H2O = (6R)-10-formyltetrahydrofolate + H(+). It functions in the pathway one-carbon metabolism; tetrahydrofolate interconversion. Functionally, catalyzes the oxidation of 5,10-methylenetetrahydrofolate to 5,10-methenyltetrahydrofolate and then the hydrolysis of 5,10-methenyltetrahydrofolate to 10-formyltetrahydrofolate. The protein is Bifunctional protein FolD 2 of Salinispora arenicola (strain CNS-205).